The sequence spans 550 residues: MTPADLAELLRGTAASVLADRGLDVSVLPETLTVERPRNPEHGDYATNIAMQVAKKVGTNPRELAGWIAEALTAADGIESAEIAGPGFLNIRLDKDAQGAIVVSVLEAGSSYGSGDSLAGKKINLEFVSANPTGPIHLGGTRWAAVGDALGRILSAQGGLVTREYYFNDHGAQIDRFSRSLIAAAKGEPAPEDGYAGAYIADIAASVLKQRPDVMELPADEQQETFRAIGVELMFTHIKQTLHDFGVDFDVYFHENSLFESGAVEKAVESLKGSGNLFHEDGAWWLKSTDYGDDKDRVVIKSDGNAAYIAGDIAYFQNKRARGFDLCIYMLGADHHGYIGRLKAAAAAFGDDPDTVEVLIGQMVNLVKDGTAVKMSKRAGTVITLDDLVEAIGVDASRYVMIRSSVDSSIDIDLDLWTKTSSENPVYYVQYAHARLSAIARNAADLGLSADASNLALLTVEQEGDLIRTIGEYPRVVSSAANLREPHRIARYLEELAGAYHRFYGACRILPQGDEDATDVHRARLALCAATRQVLANGLELLGVTAPEQM.

A 'HIGH' region motif is present at residues alanine 130–glycine 140.

The protein belongs to the class-I aminoacyl-tRNA synthetase family. Monomer.

It is found in the cytoplasm. The catalysed reaction is tRNA(Arg) + L-arginine + ATP = L-arginyl-tRNA(Arg) + AMP + diphosphate. In Rhodococcus erythropolis (strain PR4 / NBRC 100887), this protein is Arginine--tRNA ligase.